We begin with the raw amino-acid sequence, 160 residues long: Eosinophil cationic protein (160 aa).

Positions 1-27 (MVPKLFTSQICLLLLLGLMGVEGSLHA) are cleaved as a signal peptide. Positions 28–72 (RPPQFTRAQWFAIQHISLNPPRCTIAMRVINNYRWRCKNQNTFLR) are required for nearly all of the bactericidal activities; partially involved in LPS-binding. H42 (proton acceptor) is an active-site residue. Cystine bridges form between C50-C110, C64-C123, C82-C138, and C89-C98. Residue Y60 is modified to 3'-nitrotyrosine. A substrate-binding site is contributed by 65-69 (KNQNT). Residues N84, N92, and N119 are each glycosylated (N-linked (GlcNAc...) asparagine). H155 (proton donor) is an active-site residue.

It belongs to the pancreatic ribonuclease family. As to quaternary structure, interacts with bacterial lipopolysaccharide (LPS) and lipoteichoic acid (LTA). In vitro interacts with phospholipid bilayers.

Its subcellular location is the secreted. In terms of biological role, cytotoxin and helminthotoxin with low-efficiency ribonuclease activity. Possesses a wide variety of biological activities. Exhibits antibacterial activity. This Gorilla gorilla gorilla (Western lowland gorilla) protein is Eosinophil cationic protein (RNASE3).